A 360-amino-acid polypeptide reads, in one-letter code: Phospho-N-acetylmuramoyl-pentapeptide-transferase (360 aa).

The next 10 helical transmembrane spans lie at 27–47 (GAMITSALIVFLFGPTIINSL), 71–91 (TPTMGGLMIMTGILASCLLWA), 93–113 (LASVYVWVVLMVSVGFGAIGF), 128–148 (FSGKARLGIEFLIAAIAAFTI), 168–188 (LVINLSWFFILFAAFVMVGAG), 199–219 (GLAIVPVMVAAASFGFIAYLS), 239–259 (LAVVLGAVIGAGLGFLWFNAP), 262–282 (AIFMGDTGSLALGGMLGTVAV), 288–308 (IVLAIIGGLFVMEALSVIIQV), and 337–357 (QVVIRFWIVAIILAMIGLSTL).

This sequence belongs to the glycosyltransferase 4 family. MraY subfamily. Mg(2+) serves as cofactor.

Its subcellular location is the cell inner membrane. The enzyme catalyses UDP-N-acetyl-alpha-D-muramoyl-L-alanyl-gamma-D-glutamyl-meso-2,6-diaminopimeloyl-D-alanyl-D-alanine + di-trans,octa-cis-undecaprenyl phosphate = di-trans,octa-cis-undecaprenyl diphospho-N-acetyl-alpha-D-muramoyl-L-alanyl-D-glutamyl-meso-2,6-diaminopimeloyl-D-alanyl-D-alanine + UMP. The protein operates within cell wall biogenesis; peptidoglycan biosynthesis. Catalyzes the initial step of the lipid cycle reactions in the biosynthesis of the cell wall peptidoglycan: transfers peptidoglycan precursor phospho-MurNAc-pentapeptide from UDP-MurNAc-pentapeptide onto the lipid carrier undecaprenyl phosphate, yielding undecaprenyl-pyrophosphoryl-MurNAc-pentapeptide, known as lipid I. This chain is Phospho-N-acetylmuramoyl-pentapeptide-transferase, found in Brucella ovis (strain ATCC 25840 / 63/290 / NCTC 10512).